The primary structure comprises 204 residues: Peptide deformylase (204 aa).

Fe cation contacts are provided by Cys-131 and His-174. The active site involves Glu-175. His-178 is a Fe cation binding site.

This sequence belongs to the polypeptide deformylase family. The cofactor is Fe(2+).

It catalyses the reaction N-terminal N-formyl-L-methionyl-[peptide] + H2O = N-terminal L-methionyl-[peptide] + formate. In terms of biological role, removes the formyl group from the N-terminal Met of newly synthesized proteins. Requires at least a dipeptide for an efficient rate of reaction. N-terminal L-methionine is a prerequisite for activity but the enzyme has broad specificity at other positions. The sequence is that of Peptide deformylase from Streptococcus gordonii (strain Challis / ATCC 35105 / BCRC 15272 / CH1 / DL1 / V288).